We begin with the raw amino-acid sequence, 397 residues long: G2/mitotic-specific cyclin-B1 (397 aa).

It belongs to the cyclin family. Cyclin AB subfamily. Interacts with the cdc2 protein kinase to form a serine/threonine kinase holoenzyme complex also known as maturation promoting factor (MPF). The cyclin subunit imparts substrate specificity to the complex. When not in a complex with cdc2, interacts with spdya. Interacts with nap1l1. Interacts with nanos1.

The protein localises to the cytoplasm. It localises to the cytoskeleton. Its subcellular location is the microtubule organizing center. The protein resides in the centrosome. It is found in the nucleus. Essential for the control of the cell cycle at the G2/M (mitosis) transition. The chain is G2/mitotic-specific cyclin-B1 (ccnb1) from Xenopus laevis (African clawed frog).